The primary structure comprises 702 residues: Pseudouridylate synthase PUS7L (702 aa).

Residue serine 79 is modified to Phosphoserine. Positions 84-116 (NSEGAADLPGCSDGDRSHQSDSEKENSVNSVTS) are disordered. Over residues 96 to 109 (DGDRSHQSDSEKEN) the composition is skewed to basic and acidic residues. The active-site Nucleophile is the aspartate 339. The region spanning 424–646 (GFVNYYGPQR…PGCYRHIVKH (223 aa)) is the TRUD domain.

The protein belongs to the pseudouridine synthase TruD family.

The enzyme catalyses a uridine in mRNA = a pseudouridine in mRNA. Its function is as follows. Pseudouridine synthase that catalyzes pseudouridylation of mRNAs. The sequence is that of Pseudouridylate synthase PUS7L from Mus musculus (Mouse).